We begin with the raw amino-acid sequence, 588 residues long: Aspartate--tRNA ligase (588 aa).

Residue glutamate 172 coordinates L-aspartate. The tract at residues 196–199 (QLFK) is aspartate. L-aspartate is bound at residue arginine 218. ATP is bound by residues 218–220 (RDE) and glutamine 227. Histidine 449 provides a ligand contact to L-aspartate. Glutamate 483 lines the ATP pocket. Position 490 (arginine 490) interacts with L-aspartate. 535 to 538 (GLDR) is a binding site for ATP.

The protein belongs to the class-II aminoacyl-tRNA synthetase family. Type 1 subfamily. Homodimer.

The protein localises to the cytoplasm. The catalysed reaction is tRNA(Asp) + L-aspartate + ATP = L-aspartyl-tRNA(Asp) + AMP + diphosphate. In terms of biological role, catalyzes the attachment of L-aspartate to tRNA(Asp) in a two-step reaction: L-aspartate is first activated by ATP to form Asp-AMP and then transferred to the acceptor end of tRNA(Asp). The chain is Aspartate--tRNA ligase from Haemophilus influenzae (strain PittEE).